The chain runs to 293 residues: 4-hydroxy-tetrahydrodipicolinate synthase (293 aa).

Pyruvate is bound at residue Thr-45. Residue Tyr-133 is the Proton donor/acceptor of the active site. Lys-161 (schiff-base intermediate with substrate) is an active-site residue. Ile-203 contacts pyruvate.

Belongs to the DapA family. As to quaternary structure, homotetramer; dimer of dimers.

Its subcellular location is the cytoplasm. The catalysed reaction is L-aspartate 4-semialdehyde + pyruvate = (2S,4S)-4-hydroxy-2,3,4,5-tetrahydrodipicolinate + H2O + H(+). It functions in the pathway amino-acid biosynthesis; L-lysine biosynthesis via DAP pathway; (S)-tetrahydrodipicolinate from L-aspartate: step 3/4. Catalyzes the condensation of (S)-aspartate-beta-semialdehyde [(S)-ASA] and pyruvate to 4-hydroxy-tetrahydrodipicolinate (HTPA). The sequence is that of 4-hydroxy-tetrahydrodipicolinate synthase from Exiguobacterium sibiricum (strain DSM 17290 / CCUG 55495 / CIP 109462 / JCM 13490 / 255-15).